Here is a 354-residue protein sequence, read N- to C-terminus: UDP-3-O-acylglucosamine N-acyltransferase (354 aa).

His-257 acts as the Proton acceptor in catalysis.

It belongs to the transferase hexapeptide repeat family. LpxD subfamily. As to quaternary structure, homotrimer.

It carries out the reaction a UDP-3-O-[(3R)-3-hydroxyacyl]-alpha-D-glucosamine + a (3R)-hydroxyacyl-[ACP] = a UDP-2-N,3-O-bis[(3R)-3-hydroxyacyl]-alpha-D-glucosamine + holo-[ACP] + H(+). It functions in the pathway bacterial outer membrane biogenesis; LPS lipid A biosynthesis. Functionally, catalyzes the N-acylation of UDP-3-O-acylglucosamine using 3-hydroxyacyl-ACP as the acyl donor. Is involved in the biosynthesis of lipid A, a phosphorylated glycolipid that anchors the lipopolysaccharide to the outer membrane of the cell. In Rhizobium johnstonii (strain DSM 114642 / LMG 32736 / 3841) (Rhizobium leguminosarum bv. viciae), this protein is UDP-3-O-acylglucosamine N-acyltransferase.